A 133-amino-acid polypeptide reads, in one-letter code: Alpha-amylase inhibitor/endochitinase (133 aa).

E30 functions as the Proton donor in the catalytic mechanism.

It belongs to the glycosyl hydrolase 19 family. Chitinase class I subfamily.

It carries out the reaction Random endo-hydrolysis of N-acetyl-beta-D-glucosaminide (1-&gt;4)-beta-linkages in chitin and chitodextrins.. In terms of biological role, this protein functions both as an alpha-amylase inhibitor and as a chitinase. In Coix lacryma-jobi (Job's tears), this protein is Alpha-amylase inhibitor/endochitinase.